The primary structure comprises 122 residues: Large ribosomal subunit protein uL14 (122 aa).

The protein belongs to the universal ribosomal protein uL14 family. Part of the 50S ribosomal subunit. Forms a cluster with proteins L3 and L19. In the 70S ribosome, L14 and L19 interact and together make contacts with the 16S rRNA in bridges B5 and B8.

In terms of biological role, binds to 23S rRNA. Forms part of two intersubunit bridges in the 70S ribosome. In Trichormus variabilis (strain ATCC 29413 / PCC 7937) (Anabaena variabilis), this protein is Large ribosomal subunit protein uL14.